A 421-amino-acid polypeptide reads, in one-letter code: Cytochrome c biogenesis protein Ccs1 (421 aa).

Transmembrane regions (helical) follow at residues Leu12–Ile32, Thr71–Leu91, and Ile157–Ala177.

It belongs to the Ccs1/CcsB family. In terms of assembly, may interact with CcsA.

Its subcellular location is the plastid. The protein localises to the chloroplast thylakoid membrane. Its function is as follows. Required during biogenesis of c-type cytochromes (cytochrome c6 and cytochrome f) at the step of heme attachment. This Trieres chinensis (Marine centric diatom) protein is Cytochrome c biogenesis protein Ccs1.